The sequence spans 478 residues: Solute carrier family 2, facilitated glucose transporter member 8 (478 aa).

The tract at residues 1–20 (MTPEDQEETQPLLRPPGGSA) is disordered. Residues 1 to 25 (MTPEDQEETQPLLRPPGGSAPRGRR) lie on the Cytoplasmic side of the membrane. Residues 11-20 (PLLRPPGGSA) are compositionally biased toward low complexity. The Dileucine internalization motif motif lies at 12–13 (LL). The helical transmembrane segment at 26-46 (VFLAAFAAALGPLSFGFALGY) threads the bilayer. The Extracellular segment spans residues 47 to 70 (SSPAIPSLRRAAPPAPHLDEDAAS). A helical transmembrane segment spans residues 71 to 91 (WFGAIVTLGAAAGGVLGGWLL). At 92–97 (DRAGRK) the chain is on the cytoplasmic side. A helical membrane pass occupies residues 98–118 (LSLVLCALPFVAGFAVITAAQ). Topologically, residues 119 to 127 (NLWMLLGGR) are extracellular. A helical membrane pass occupies residues 128-148 (LLTGLACGIASLVAPVYISEI). Residues 149–158 (AYPEVRGLLG) are Cytoplasmic-facing. The helical transmembrane segment at 159–179 (SCVQLMVVTGILLAYLAGWVL) threads the bilayer. Q162 contacts D-glucose. The Extracellular segment spans residues 180-182 (EWR). Residues 183-203 (WLAVLGCVPPSFMLLLMCFMP) form a helical membrane-spanning segment. Residues 204 to 257 (ETPRFLLSQHKHQEAMAAMQFLWGYAQGWEEPPLGAQHQDFHVAQLRRPGVYKP) lie on the Cytoplasmic side of the membrane. A helical transmembrane segment spans residues 258–278 (FIIGISLMAFQQLSGVNAVMF). D-glucose is bound by residues 268 to 269 (QQ) and N274. Residues 279–293 (YAETIFEEAKFKDSS) are Extracellular-facing. The chain crosses the membrane as a helical span at residues 294-314 (LASVVVGVIQVLFTATAALIM). The Cytoplasmic portion of the chain corresponds to 315 to 320 (DRAGRR). The helical transmembrane segment at 321–341 (LLLTLSGVVMVFSTSAFGTYF) threads the bilayer. At 342–368 (KLTEGGPSNSSHVDLPALVSMEAADTN) the chain is on the extracellular side. N-linked (GlcNAc...) asparagine glycosylation occurs at N350. The chain crosses the membrane as a helical span at residues 369–389 (VGLAWLAVGSMCLFIAGFAVG). Over 390 to 405 (WGPIPWLLMSEIFPLH) the chain is Cytoplasmic. D-glucose is bound at residue W395. A helical transmembrane segment spans residues 406–426 (VKGVATGVCVLTNWFMAFLVT). The Extracellular portion of the chain corresponds to 427–439 (KEFSSLMEVLRPY). Residues 440–460 (GAFWLASAFCIFGVLFTLACV) form a helical membrane-spanning segment. The Cytoplasmic portion of the chain corresponds to 461-478 (PETKGKTLEQITAHFEGR).

It belongs to the major facilitator superfamily. Sugar transporter (TC 2.A.1.1) family. Glucose transporter subfamily. As to quaternary structure, interacts with AP2B1. As to expression, abundantly expressed in testis and more moderately in lung, kidney, spleen, intestine, skeletal muscle, liver and mammary gland.

Its subcellular location is the cell membrane. It is found in the cytoplasmic vesicle membrane. The enzyme catalyses D-glucose(out) = D-glucose(in). The catalysed reaction is D-fructose(out) = D-fructose(in). It catalyses the reaction L-dehydroascorbate(out) = L-dehydroascorbate(in). It carries out the reaction alpha,alpha-trehalose(in) = alpha,alpha-trehalose(out). Its activity is regulated as follows. Inhibited by cytochalasin B. Its function is as follows. Insulin-regulated facilitative hexose transporter that mediates the transport of glucose and fructose. Facilitates hepatic influx of dietary trehalose, which in turn inhibits glucose and fructose influx triggering a starvation signal and hepatic autophagy through activation of AMPK and ULK1. Also able to mediate the transport of dehydroascorbate. The protein is Solute carrier family 2, facilitated glucose transporter member 8 of Bos taurus (Bovine).